The primary structure comprises 270 residues: 3-phenylpropionate-dihydrodiol/cinnamic acid-dihydrodiol dehydrogenase (270 aa).

Residue 10 to 34 (FITGGGSGLGLALVERFIEEGAQVA) participates in NAD(+) binding. Ser-143 contributes to the substrate binding site. Tyr-156 acts as the Proton acceptor in catalysis.

It belongs to the short-chain dehydrogenases/reductases (SDR) family.

It catalyses the reaction 3-(cis-5,6-dihydroxycyclohexa-1,3-dien-1-yl)propanoate + NAD(+) = 3-(2,3-dihydroxyphenyl)propanoate + NADH + H(+). The catalysed reaction is (2E)-3-(cis-5,6-dihydroxycyclohexa-1,3-dien-1-yl)prop-2-enoate + NAD(+) = (2E)-3-(2,3-dihydroxyphenyl)prop-2-enoate + NADH + H(+). Its pathway is aromatic compound metabolism; 3-phenylpropanoate degradation. Converts 3-phenylpropionate-dihydrodiol (PP-dihydrodiol) and cinnamic acid-dihydrodiol (CI-dihydrodiol) into 3-(2,3-dihydroxylphenyl)propanoic acid (DHPP) and 2,3-dihydroxicinnamic acid (DHCI), respectively. The polypeptide is 3-phenylpropionate-dihydrodiol/cinnamic acid-dihydrodiol dehydrogenase (Shigella flexneri serotype 5b (strain 8401)).